Consider the following 796-residue polypeptide: MLRQIVSQRSAARRQLIDQLAPCLRRGLATATDSTPTSSRMPPYSKIVQNLEQVRKVLGSSRALTLAEKILYSHLDNAEESLLTGTNNGRDIRGKADLKLKPDRVAMQDASAQMALLQFMSCGLPSTAVPASIHCDHMIVGERGADTDLPASIQGNKEVFDFLESASKRYGIEFWPPGAGIIHQSVLENYSAPGLMMLGTDSHTPNAGGLGAIAIGVGGADAVDALVDAPWELKAPRILGVRLEGKLQGWAAPKDIILHLAGKLTVRGGTGFVIEYHGPGVETLSTTGMATICNMGAEVGATTSLFPFSPNHVPYLKATNRADVAEAAAKIASAGSSSLLRADTSAEYDELITIDLSTLEPHINGPFTPDLSVPLSRFAETVRKNNWPETFNAGLIGSCTNSSYEDMTRAEHLVKQANAAGLKPKADLFITPGSEQIRATLDRDQTLSTFSSAGGTVLANACGPCIGQWKRTDDVPKGTDNAIFTSYNRNFPGRNDGNRRTMNFLASPELVTALTYAGSTTFNPVTDSITTPSGSEFRFEPPTGQDLPSKGFEAGNPAFQPSAPVPDSSVEVKVSPTSTRLALLEPFAPFPNSDLQNLSVLYKVKGQCTTDTISAAGPWLKYKGHLPNISANTLIGAVNAATGETNVAYDEAGKQHTIPDLAAQWKAQGREWLVVAEENYGEGSAREHAALQPRYLGGRVILAKSFARIHETNLKKQGVVPLTFADKADYDRIDACDVVATEGLYETLKNGGKGEVKLRVTKKSGEEIVIPVKHTLSADQSSFILAGSALNVLSKR.

Residues 1–28 (MLRQIVSQRSAARRQLIDQLAPCLRRGL) constitute a mitochondrion transit peptide. Substrate-binding positions include Q108 and 201–203 (DSH). 3 residues coordinate [4Fe-4S] cluster: C399, C462, and C465. Substrate-binding residues include R489 and R494. The segment at 540-569 (EPPTGQDLPSKGFEAGNPAFQPSAPVPDSS) is disordered. A substrate-binding site is contributed by 685–686 (AR).

The protein belongs to the aconitase/IPM isomerase family.

It localises to the mitochondrion. In terms of biological role, has no detectable activity towards cis-acontiate or cis-homoaconitate. This Emericella nidulans (strain FGSC A4 / ATCC 38163 / CBS 112.46 / NRRL 194 / M139) (Aspergillus nidulans) protein is Putative aconitate hydratase, mitochondrial (acoB).